The following is a 532-amino-acid chain: E3 ubiquitin-protein ligase MGRN1 (532 aa).

Residue G2 is the site of N-myristoyl glycine attachment. An RING-type zinc finger spans residues 277-316 (ECVVCLSDLRDTLILPCRHLCLCTSCADTLRYQANNCPIC). The short motif at 384-387 (PSAP) is the Required for TSG101-binding element. Y389 carries the phosphotyrosine modification. The disordered stretch occupies residues 419–518 (LQKGKTQSKS…QPVPPADIYL (100 aa)). Residues 422-435 (GKTQSKSPDSTLRS) show a composition bias toward polar residues. Phosphoserine occurs at positions 428, 449, 452, and 501. Over residues 442-453 (EEDEEKLSEDSD) the composition is skewed to acidic residues.

In terms of assembly, interacts with MC1R and MC4R. Interacts with TSG101. Interacts with mislocalized cytosolically exposed PRNP; this interaction alters MGRN1 subcellular location and causes lysosomal enlargement. In terms of processing, autoubiquitinated in vitro. As to expression, widely expressed, with highest levels in brain, heart, kidney and liver. In the CNS, especially prominent in the Purkinje cells of the cerebellum. In the skin, expressed in the basal layer of the epidermis and hair follicles, primarily in the outer root sheath. Isoforms 1, 3, 4 and 5 are equally expressed in the liver. Isoforms 1, 3 and 4 are most abundant in brain, kidney and heart, respectively.

It localises to the early endosome. It is found in the cytoplasm. The protein localises to the cell membrane. The protein resides in the nucleus. It catalyses the reaction S-ubiquitinyl-[E2 ubiquitin-conjugating enzyme]-L-cysteine + [acceptor protein]-L-lysine = [E2 ubiquitin-conjugating enzyme]-L-cysteine + N(6)-ubiquitinyl-[acceptor protein]-L-lysine.. It participates in protein modification; protein ubiquitination. Functionally, E3 ubiquitin-protein ligase. Mediates TSG101 monoubiquitination at multiple sites. Plays a role in the regulation of endosome-to-lysosome trafficking. Impairs MC1R- and MC4R-signaling by competing with GNAS-binding to MCRs and inhibiting agonist-induced cAMP production. Does not inhibit ADRB2-signaling. Does not promote MC1R ubiquitination. Also acts as a negative regulator of hedgehog signaling. The sequence is that of E3 ubiquitin-protein ligase MGRN1 (Mgrn1) from Mus musculus (Mouse).